The following is a 65-amino-acid chain: Small ribosomal subunit protein eS31 (65 aa).

Residues Cys-36, Cys-39, Cys-55, and Cys-58 each coordinate Zn(2+). A C4-type zinc finger spans residues 36-58 (CPKCGSVMAFHKEPVPRWHCGKC).

This sequence belongs to the eukaryotic ribosomal protein eS31 family. Part of the 30S ribosomal subunit. Zn(2+) is required as a cofactor.

This Pyrobaculum aerophilum (strain ATCC 51768 / DSM 7523 / JCM 9630 / CIP 104966 / NBRC 100827 / IM2) protein is Small ribosomal subunit protein eS31.